Here is a 185-residue protein sequence, read N- to C-terminus: Ribosome-recycling factor (185 aa).

Belongs to the RRF family.

The protein localises to the cytoplasm. Functionally, responsible for the release of ribosomes from messenger RNA at the termination of protein biosynthesis. May increase the efficiency of translation by recycling ribosomes from one round of translation to another. The protein is Ribosome-recycling factor of Corynebacterium kroppenstedtii (strain DSM 44385 / JCM 11950 / CIP 105744 / CCUG 35717).